Consider the following 853-residue polypeptide: MDNKKLNTLIESIDQWVIESNDEKISELYRQSSKADNEFEDIPILKDCITLAFNILLGDSLVGSFKTDLMKKLFLLDSLNNYKDNINEYFEKVNNNITSLNETPLNQLSVLLSGITFLNLYVQINWTGPTVQISPDFTLKNDNKSILELLEVDGETVYKKVKNPIFLYLSKICLVDNYSMLDSCKSSCWWSCRSVMYHQRSLKNATPTFKSLLNERFQIVTRFYSISTLLEDSEEFMDTSSSTTSESKKSIKEINGLKDLASRAIIEQSLVFNYFRQLNKIKESMERACEVSELDCALTGALGKRTRFQTFDTAQLVMEVKNCRQRDDSGDGDNNNEFNRNSSIKREVTNDDPTLLVRPSLIEEVKGQNILLRNVDQMLILLQCLNVKNQNSNNGLTTEEMLPYIQKTLEKSNNWIIHSMGLLIKSRLEIVSSKTAERAVLQIQALVDQYDDPTSSATERINAIYSTDYPARWDLEKEVAERFIGIGAAASAFEIFERLEMWDEAIKCLTFMGKNSRSEELVLQRLEIEPSPELYCVLGDLKSDEQFYIKGWELSKKRYSRAQRSLARFYLEREQYQLCIDAFQIALAINPLFPNSWFSLGCAAMKIEKWDTALNAFSRVVSLEPEEGEGWANLASIYMYQNKMDKASSALMEGLKHKRENWKMWENFLFCCIAIKDYQNAVIAINHIFDLNDKKVNLKLLSIIADHVVSKDQLDKQGISGSKMEKTVSELFGRLTSKLTNNPDLWRLYSSYHHRLGNVDKAIDLQQKACRSCESAHWEGEQSTFEKVLQFNTTLCDLYFQYPNTSNIYSAKLKVKSILKKCESSWKETEHYKNFEQLLIKLNNYESELLQKK.

Residues 324–345 (RQRDDSGDGDNNNEFNRNSSIK) form a disordered region. Positions 332-342 (GDNNNEFNRNS) are enriched in polar residues. 6 TPR repeats span residues 486–519 (IGAAASAFEIFERLEMWDEAIKCLTFMGKNSRSE), 525–558 (RLEIEPSPELYCVLGDLKSDEQFYIKGWELSKKR), 560–593 (SRAQRSLARFYLEREQYQLCIDAFQIALAINPLF), 594–627 (PNSWFSLGCAAMKIEKWDTALNAFSRVVSLEPEE), 629–661 (EGWANLASIYMYQNKMDKASSALMEGLKHKREN), and 662–695 (WKMWENFLFCCIAIKDYQNAVIAINHIFDLNDKK).

It belongs to the TTC27 family.

This chain is Tetratricopeptide repeat protein 27 homolog (ttc27), found in Dictyostelium discoideum (Social amoeba).